The primary structure comprises 105 residues: Small ribosomal subunit protein uS10 (105 aa).

This sequence belongs to the universal ribosomal protein uS10 family. In terms of assembly, part of the 30S ribosomal subunit.

In terms of biological role, involved in the binding of tRNA to the ribosomes. The protein is Small ribosomal subunit protein uS10 of Roseobacter denitrificans (strain ATCC 33942 / OCh 114) (Erythrobacter sp. (strain OCh 114)).